The primary structure comprises 209 residues: Large ribosomal subunit protein uL4 (209 aa).

The protein belongs to the universal ribosomal protein uL4 family. As to quaternary structure, part of the 50S ribosomal subunit.

One of the primary rRNA binding proteins, this protein initially binds near the 5'-end of the 23S rRNA. It is important during the early stages of 50S assembly. It makes multiple contacts with different domains of the 23S rRNA in the assembled 50S subunit and ribosome. Functionally, forms part of the polypeptide exit tunnel. The polypeptide is Large ribosomal subunit protein uL4 (Borrelia duttonii (strain Ly)).